Here is a 156-residue protein sequence, read N- to C-terminus: Small ribosomal subunit protein uS7 (156 aa).

The protein belongs to the universal ribosomal protein uS7 family. Part of the 30S ribosomal subunit. Contacts proteins S9 and S11.

Its function is as follows. One of the primary rRNA binding proteins, it binds directly to 16S rRNA where it nucleates assembly of the head domain of the 30S subunit. Is located at the subunit interface close to the decoding center, probably blocks exit of the E-site tRNA. The protein is Small ribosomal subunit protein uS7 of Streptococcus pyogenes serotype M1.